The primary structure comprises 269 residues: 3-methyl-2-oxobutanoate hydroxymethyltransferase (269 aa).

Mg(2+) contacts are provided by Asp-50 and Asp-89. 3-methyl-2-oxobutanoate is bound by residues 50 to 51 (DS), Asp-89, and Lys-118. Glu-120 serves as a coordination point for Mg(2+). Glu-187 serves as the catalytic Proton acceptor.

Belongs to the PanB family. Homodecamer; pentamer of dimers. Requires Mg(2+) as cofactor.

It is found in the cytoplasm. The catalysed reaction is 3-methyl-2-oxobutanoate + (6R)-5,10-methylene-5,6,7,8-tetrahydrofolate + H2O = 2-dehydropantoate + (6S)-5,6,7,8-tetrahydrofolate. Its pathway is cofactor biosynthesis; (R)-pantothenate biosynthesis; (R)-pantoate from 3-methyl-2-oxobutanoate: step 1/2. Its function is as follows. Catalyzes the reversible reaction in which hydroxymethyl group from 5,10-methylenetetrahydrofolate is transferred onto alpha-ketoisovalerate to form ketopantoate. This Aliarcobacter butzleri (strain RM4018) (Arcobacter butzleri) protein is 3-methyl-2-oxobutanoate hydroxymethyltransferase.